Here is a 381-residue protein sequence, read N- to C-terminus: 6-oxocyclohex-1-ene-1-carbonyl-CoA hydrolase (381 aa).

It belongs to the enoyl-CoA hydratase/isomerase family. As to quaternary structure, homohexamer.

It carries out the reaction 6-oxocyclohex-1-ene-1-carbonyl-CoA + 2 H2O = 3-hydroxy-6-carboxyhexanoyl-CoA + H(+). Its pathway is aromatic compound metabolism; benzoyl-CoA degradation. Involved in the central benzoyl-CoA catabolism. Catalyzes the addition of one molecule of water to the double bond and the hydrolytic cleavage of C-C bond in the alicyclic ring, 6-oxocyclohex-1-ene-1-carbonyl-CoA (6-OCH-CoA) to yield 3-hydroxypimelyl-CoA. This is 6-oxocyclohex-1-ene-1-carbonyl-CoA hydrolase from Geobacter metallireducens (strain ATCC 53774 / DSM 7210 / GS-15).